Reading from the N-terminus, the 115-residue chain is Nucleoid-associated protein LA_4332 (115 aa).

The protein belongs to the YbaB/EbfC family. In terms of assembly, homodimer.

The protein localises to the cytoplasm. It localises to the nucleoid. Functionally, binds to DNA and alters its conformation. May be involved in regulation of gene expression, nucleoid organization and DNA protection. The protein is Nucleoid-associated protein LA_4332 of Leptospira interrogans serogroup Icterohaemorrhagiae serovar Lai (strain 56601).